We begin with the raw amino-acid sequence, 216 residues long: Probable GTP-binding protein EngB (216 aa).

The EngB-type G domain maps to 43–216 (DRIEVCFAGR…TLRSIIAHLD (174 aa)). GTP is bound by residues 51–58 (GRSNVGKS), 78–82 (GRTQE), 96–99 (DLPG), 163–166 (TKAD), and 197–199 (TSS). Positions 58 and 80 each coordinate Mg(2+).

It belongs to the TRAFAC class TrmE-Era-EngA-EngB-Septin-like GTPase superfamily. EngB GTPase family. The cofactor is Mg(2+).

Functionally, necessary for normal cell division and for the maintenance of normal septation. This is Probable GTP-binding protein EngB from Ruegeria sp. (strain TM1040) (Silicibacter sp.).